A 205-amino-acid chain; its full sequence is MSIKYVASSKLPTPWGVFTMHGFEDSDTGKEHVALTLGTLDANTPILGRIHSECLTGDALFSLRCDCGFQLQTAMQNIAEAGQGFILYLRQEGRGIGLLNKIRAYELQDQGANTVEANERLGFPADMRKYDMILPMMEKIGIKQVKLMTNNPRKVKAMKELGIEVVERIPLQVGKNRYNEGYLKTKSTELGHMMSEYHFTGEEKE.

Residue 49-53 participates in GTP binding; sequence RIHSE. Zn(2+) is bound by residues Cys-54, Cys-65, and Cys-67. GTP-binding positions include Gln-70, 92–94, and Thr-114; that span reads EGR. The Proton acceptor role is filled by Asp-126. Residue Arg-128 is the Nucleophile of the active site. The GTP site is built by Thr-149 and Lys-154.

Belongs to the GTP cyclohydrolase II family. The cofactor is Zn(2+).

The enzyme catalyses GTP + 4 H2O = 2,5-diamino-6-hydroxy-4-(5-phosphoribosylamino)-pyrimidine + formate + 2 phosphate + 3 H(+). It participates in cofactor biosynthesis; riboflavin biosynthesis; 5-amino-6-(D-ribitylamino)uracil from GTP: step 1/4. Its function is as follows. Catalyzes the conversion of GTP to 2,5-diamino-6-ribosylamino-4(3H)-pyrimidinone 5'-phosphate (DARP), formate and pyrophosphate. The protein is GTP cyclohydrolase-2 of Shewanella sediminis (strain HAW-EB3).